Consider the following 449-residue polypeptide: Neuraminidase (449 aa).

Residues 1 to 6 (MNPNQK) are Intravirion-facing. The chain crosses the membrane as a helical span at residues 7–27 (IITIGSICMVIGIVSLMLQIG). Residues 11–33 (GSICMVIGIVSLMLQIGNIISIW) are involved in apical transport and lipid raft association. The Virion surface portion of the chain corresponds to 28 to 449 (NIISIWVSHS…GAELPFTIDK (422 aa)). The interval 36–70 (HSIQTGNQHQAEPISNTNFLTEKAVASVTLAGNSS) is hypervariable stalk region. N-linked (GlcNAc...) asparagine; by host glycosylation is present at asparagine 68. Positions 71–449 (LCPISGWAVH…GAELPFTIDK (379 aa)) are head of neuraminidase. Cystine bridges form between cysteine 72/cysteine 397, cysteine 104/cysteine 109, cysteine 164/cysteine 211, cysteine 213/cysteine 218, cysteine 259/cysteine 272, cysteine 261/cysteine 270, cysteine 298/cysteine 315, and cysteine 401/cysteine 426. Arginine 98 is a substrate binding site. The N-linked (GlcNAc...) asparagine; by host glycan is linked to asparagine 126. The active-site Proton donor/acceptor is the aspartate 131. Arginine 132 is a binding site for substrate. N-linked (GlcNAc...) asparagine; by host glycosylation is present at asparagine 215. Substrate is bound at residue 257-258 (EE). Arginine 273 contacts substrate. 3 residues coordinate Ca(2+): aspartate 274, glycine 278, and aspartate 304. Arginine 348 lines the substrate pocket. The active-site Nucleophile is the tyrosine 382.

The protein belongs to the glycosyl hydrolase 34 family. As to quaternary structure, homotetramer. It depends on Ca(2+) as a cofactor. In terms of processing, N-glycosylated.

It localises to the virion membrane. The protein localises to the host apical cell membrane. It catalyses the reaction Hydrolysis of alpha-(2-&gt;3)-, alpha-(2-&gt;6)-, alpha-(2-&gt;8)- glycosidic linkages of terminal sialic acid residues in oligosaccharides, glycoproteins, glycolipids, colominic acid and synthetic substrates.. Inhibited by the neuraminidase inhibitors zanamivir (Relenza) and oseltamivir (Tamiflu). These drugs interfere with the release of progeny virus from infected cells and are effective against all influenza strains. Resistance to neuraminidase inhibitors is quite rare. Its function is as follows. Catalyzes the removal of terminal sialic acid residues from viral and cellular glycoconjugates. Cleaves off the terminal sialic acids on the glycosylated HA during virus budding to facilitate virus release. Additionally helps virus spread through the circulation by further removing sialic acids from the cell surface. These cleavages prevent self-aggregation and ensure the efficient spread of the progeny virus from cell to cell. Otherwise, infection would be limited to one round of replication. Described as a receptor-destroying enzyme because it cleaves a terminal sialic acid from the cellular receptors. May facilitate viral invasion of the upper airways by cleaving the sialic acid moieties on the mucin of the airway epithelial cells. Likely to plays a role in the budding process through its association with lipid rafts during intracellular transport. May additionally display a raft-association independent effect on budding. Plays a role in the determination of host range restriction on replication and virulence. Sialidase activity in late endosome/lysosome traffic seems to enhance virus replication. The polypeptide is Neuraminidase (Aves (Cat)).